The sequence spans 250 residues: DNA repair protein RecO (250 aa).

It belongs to the RecO family.

In terms of biological role, involved in DNA repair and RecF pathway recombination. In Staphylococcus haemolyticus (strain JCSC1435), this protein is DNA repair protein RecO.